A 147-amino-acid polypeptide reads, in one-letter code: Hemoglobin subunit beta-1 (147 aa).

The Globin domain maps to 3-147 (NLTAKERQLI…IADALGKGYH (145 aa)). Positions 64 and 93 each coordinate heme b.

Belongs to the globin family. In terms of assembly, heterotetramer of two alpha chains and two beta chains. As to expression, red blood cells.

Involved in oxygen transport from the lung to the various peripheral tissues. This is Hemoglobin subunit beta-1 (hbb1) from Xenopus tropicalis (Western clawed frog).